Consider the following 3063-residue polypeptide: Collagen alpha-1(XII) chain (3063 aa).

The N-terminal stretch at 1–23 is a signal peptide; it reads MRSRLPPALAALGAALLLSSIEA. One can recognise a Fibronectin type-III 1 domain in the interval 27–117; sequence PPSDLNFKII…GQLTIQTGSS (91 aa). A VWFA 1 domain is found at 140-316; that stretch reads DLVFLVDGSW…DIQNEIISQV (177 aa). Residue serine 329 is glycosylated (O-linked (Xyl...) (chondroitin sulfate) serine). The Fibronectin type-III 2 domain occupies 336 to 426; sequence PPSNLIAMEV…SIMEKTQPMK (91 aa). The 177-residue stretch at 440–616 folds into the VWFA 2 domain; sequence DIVFLVDGSY…RISFELTQSI (177 aa). Fibronectin type-III domains are found at residues 634–722, 725–816, 817–905, 907–998, 999–1087, and 1089–1179; these read PPKD…TEEV, APRN…VRGN, PRDL…LEER, SPQD…LSQD, SKTL…ASRF, and SPRN…TLSD. Asparagine 700 is a glycosylation site (N-linked (GlcNAc...) asparagine). Serine 798 carries an O-linked (Xyl...) (chondroitin sulfate) serine glycan. The disordered stretch occupies residues 799–830; it reads GPGTPLTGNAATEEVRGNPRDLRVSDPTTSTM. A compositionally biased stretch (basic and acidic residues) spans 811 to 822; the sequence is EEVRGNPRDLRV. The Cell attachment site signature appears at 862–864; that stretch reads RGD. O-linked (Xyl...) (chondroitin sulfate) serine glycosylation is found at serine 889 and serine 981. A disordered region spans residues 1077-1099; that stretch reads RQGSGTTASRFKSPRNLKTSDPT. Over residues 1079 to 1099 the composition is skewed to polar residues; sequence GSGTTASRFKSPRNLKTSDPT. In terms of domain architecture, VWFA 3 spans 1199-1371; that stretch reads DIVLLVDGSW…ESLSRIVDDL (173 aa). Fibronectin type-III domains are found at residues 1387–1476, 1477–1567, 1568–1658, 1659–1754, 1755–1849, 1850–1935, 1936–2026, 2027–2117, 2118–2206, and 2207–2294; these read APSN…LPVP, VVSL…LPLP, RPQD…VPAP, TNLK…APKS, GPRN…TVRN, LRVY…LMRG, LARN…LPRS, GPRN…VGLL, PPQN…LYLN, and VTDL…TVKP. N-linked (GlcNAc...) asparagine glycosylation is present at asparagine 1763. N-linked (GlcNAc...) asparagine glycosylation occurs at asparagine 2206. Residues 2283–2312 are disordered; sequence GVSVKEHTTVKPTEAPTEPPTPPPPPTIPP. A compositionally biased stretch (pro residues) spans 2299 to 2311; sequence TEPPTPPPPPTIP. Residues 2323-2496 enclose the VWFA 4 domain; sequence DIVFLTDASW…ESFEKIEDNL (174 aa). The segment at 2451-2746 is nonhelical region (NC3); sequence SGFSVFVVGV…NSCTCTQDSV (296 aa). One can recognise a Laminin G-like domain in the interval 2520–2712; the sequence is GFKMLEAYNL…IQSFDIVCSP (193 aa). Residues asparagine 2528 and asparagine 2679 are each glycosylated (N-linked (GlcNAc...) asparagine). Disordered regions lie at residues 2743–2896 and 2932–3063; these read QDSV…GDRG and NDYQ…PGSG. Collagen-like domains are found at residues 2747 to 2798, 2802 to 2852, 2853 to 2898, and 2941 to 2990; these read GPPG…GPNG, PGEQ…AMGP, RGPP…RGDI, and PGPP…GERG. The tract at residues 2747-2898 is triple-helical region (COL2) with 1 imperfection; the sequence is GPPGPPGPAG…KGEKGDRGDI (152 aa). The short motif at 2779–2781 is the Cell attachment site element; that stretch reads RGD. Pro residues predominate over residues 2784–2794; it reads PPGPQGPPGPQ. Residues 2817–2826 are compositionally biased toward low complexity; that stretch reads PGLPGRTGTP. Composition is skewed to pro residues over residues 2828 to 2837 and 2853 to 2862; these read LPGPPGPMGP and RGPPGPPGSP. The span at 2864–2874 shows a compositional bias: low complexity; sequence SPGVTGPSGKP. The Cell attachment site motif lies at 2895 to 2897; the sequence is RGD. The tract at residues 2899-2941 is nonhelical region (NC2); that stretch reads ASQNMMRAVARQVCEQLISGQMNRFNQMLNQIPNDYQSSRNQP. The segment covering 2941 to 2950 has biased composition (pro residues); that stretch reads PGPPGPPGPP. Positions 2942–3044 are triple-helical region (COL1) with 2 imperfections; sequence GPPGPPGPPG…RGPPGPPGYC (103 aa). 14 positions are modified to 4-hydroxyproline: proline 2944, proline 2947, proline 2950, proline 2959, proline 2965, proline 2968, proline 2971, proline 2983, proline 3000, proline 3003, proline 3014, proline 3023, proline 3026, and proline 3029. The segment covering 2957–2966 has biased composition (gly residues); it reads GEPGPGGRPG. A compositionally biased stretch (low complexity) spans 3006 to 3020; sequence QGESRTGPPGSTGSR. Positions 3045–3063 are nonhelical region (NC1); sequence DSSQCASIPYNGQGYPGSG.

The protein belongs to the fibril-associated collagens with interrupted helices (FACIT) family. As to quaternary structure, trimer of identical chains each containing 190 kDa of non-triple-helical sequences. Post-translationally, the triple-helical tail is stabilized by disulfide bonds at each end. Hydroxylation on proline residues within the sequence motif, GXPG, is most likely to be 4-hydroxy as this fits the requirement for 4-hydroxylation in vertebrates. In terms of processing, isoform 1 O-glycosylation; glycosaminoglycan of chondroitin-sulfate type. As to expression, found in collagen I-containing tissues: both isoform 1 and isoform 2 appear in amnion, chorion, skeletal muscle, small intestine, and in cell culture of dermal fibroblasts, keratinocytes and endothelial cells. Only isoform 2 is found in lung, placenta, kidney and a squamous cell carcinoma cell line. Isoform 1 is also present in the corneal epithelial Bowman's membrane (BM) and the interfibrillar matrix of the corneal stroma, but it is not detected in the limbal BM.

The protein resides in the secreted. It localises to the extracellular space. The protein localises to the extracellular matrix. In terms of biological role, type XII collagen interacts with type I collagen-containing fibrils, the COL1 domain could be associated with the surface of the fibrils, and the COL2 and NC3 domains may be localized in the perifibrillar matrix. In Homo sapiens (Human), this protein is Collagen alpha-1(XII) chain (COL12A1).